The following is a 990-amino-acid chain: Bifunctional glutamine synthetase adenylyltransferase/adenylyl-removing enzyme (990 aa).

The adenylyl removase stretch occupies residues 1–474 (MIFSAITADL…HYAKLFEGDP (474 aa)). Residues 478 to 990 (AKLPPVDYGA…FSRLIGGEDA (513 aa)) are adenylyl transferase.

It belongs to the GlnE family. Requires Mg(2+) as cofactor.

The catalysed reaction is [glutamine synthetase]-O(4)-(5'-adenylyl)-L-tyrosine + phosphate = [glutamine synthetase]-L-tyrosine + ADP. The enzyme catalyses [glutamine synthetase]-L-tyrosine + ATP = [glutamine synthetase]-O(4)-(5'-adenylyl)-L-tyrosine + diphosphate. Its function is as follows. Involved in the regulation of glutamine synthetase GlnA, a key enzyme in the process to assimilate ammonia. When cellular nitrogen levels are high, the C-terminal adenylyl transferase (AT) inactivates GlnA by covalent transfer of an adenylyl group from ATP to specific tyrosine residue of GlnA, thus reducing its activity. Conversely, when nitrogen levels are low, the N-terminal adenylyl removase (AR) activates GlnA by removing the adenylyl group by phosphorolysis, increasing its activity. The regulatory region of GlnE binds the signal transduction protein PII (GlnB) which indicates the nitrogen status of the cell. The sequence is that of Bifunctional glutamine synthetase adenylyltransferase/adenylyl-removing enzyme from Rhodopseudomonas palustris (strain ATCC BAA-98 / CGA009).